The primary structure comprises 21 residues: Fibrinogen beta chain (21 aa).

Pyrrolidone carboxylic acid is present on Gln-1. Tyr-6 carries the post-translational modification Sulfotyrosine.

In terms of assembly, heterohexamer; disulfide linked. Contains 2 sets of 3 non-identical chains (alpha, beta and gamma). The 2 heterotrimers are in head to head conformation with the N-termini in a small central domain. In terms of processing, conversion of fibrinogen to fibrin is triggered by thrombin, which cleaves fibrinopeptides A and B from alpha and beta chains, and thus exposes the N-terminal polymerization sites responsible for the formation of the soft clot.

The protein resides in the secreted. Its function is as follows. Cleaved by the protease thrombin to yield monomers which, together with fibrinogen alpha (FGA) and fibrinogen gamma (FGG), polymerize to form an insoluble fibrin matrix. Fibrin has a major function in hemostasis as one of the primary components of blood clots. In addition, functions during the early stages of wound repair to stabilize the lesion and guide cell migration during re-epithelialization. Was originally thought to be essential for platelet aggregation, based on in vitro studies using anticoagulated blood. However subsequent studies have shown that it is not absolutely required for thrombus formation in vivo. Enhances expression of SELP in activated platelets. Maternal fibrinogen is essential for successful pregnancy. Fibrin deposition is also associated with infection, where it protects against IFNG-mediated hemorrhage. May also facilitate the antibacterial immune response via both innate and T-cell mediated pathways. This Odocoileus hemionus (Mule deer) protein is Fibrinogen beta chain (FGB).